The following is a 490-amino-acid chain: Cytochrome P450 71A22 (490 aa).

Residues 2–22 form a helical membrane-spanning segment; it reads ESMIRIILLSLIIFITILFFI. Cys-432 serves as a coordination point for heme.

It belongs to the cytochrome P450 family. Heme is required as a cofactor.

Its subcellular location is the membrane. This chain is Cytochrome P450 71A22 (CYP71A22), found in Arabidopsis thaliana (Mouse-ear cress).